A 59-amino-acid polypeptide reads, in one-letter code: Large ribosomal subunit protein bL32 (59 aa).

Residues 1-59 are disordered; it reads MAVQQNKKSPSKRGMHRSHDHLSAAPLAVEPTTGETHLRHHVSPNGYYRGRKVIKTKND. 2 stretches are compositionally biased toward basic residues: residues 9–19 and 49–59; these read SPSKRGMHRSH and RGRKVIKTKND.

This sequence belongs to the bacterial ribosomal protein bL32 family.

The polypeptide is Large ribosomal subunit protein bL32 (Cupriavidus necator (strain ATCC 17699 / DSM 428 / KCTC 22496 / NCIMB 10442 / H16 / Stanier 337) (Ralstonia eutropha)).